Here is a 118-residue protein sequence, read N- to C-terminus: D-dopachrome decarboxylase (118 aa).

P2 carries the N-acetylproline modification. K33 is modified (N6-acetyllysine).

Belongs to the MIF family. As to quaternary structure, homotrimer. As to expression, highly expressed in the liver and at lower levels in the heart, lung and pancreas.

Its subcellular location is the cytoplasm. The enzyme catalyses D-dopachrome + H(+) = 5,6-dihydroxyindole + CO2. In terms of biological role, tautomerization of D-dopachrome with decarboxylation to give 5,6-dihydroxyindole (DHI). The polypeptide is D-dopachrome decarboxylase (DDT) (Homo sapiens (Human)).